The chain runs to 434 residues: Maltoporin (434 aa).

An N-terminal signal peptide occupies residues 1–25 (MMTTLRKLPLALAIAAGVLTTQAMA).

The protein belongs to the porin LamB (TC 1.B.3) family. In terms of assembly, homotrimer formed of three 18-stranded antiparallel beta-barrels, containing three independent channels.

The protein localises to the cell outer membrane. The catalysed reaction is beta-maltose(in) = beta-maltose(out). Functionally, involved in the transport of maltose and maltodextrins. The polypeptide is Maltoporin (Serratia proteamaculans (strain 568)).